An 89-amino-acid polypeptide reads, in one-letter code: UPF0213 protein HQ_3675A (89 aa).

The GIY-YIG domain maps to 3–78 (DYHYVYIVEC…KSYTREKKQQ (76 aa)).

Belongs to the UPF0213 family.

The chain is UPF0213 protein HQ_3675A from Haloquadratum walsbyi (strain DSM 16790 / HBSQ001).